The sequence spans 113 residues: Translation initiation factor IF-1, chloroplastic (113 aa).

Positions 8–83 (REKKNPREAK…SKGRIIYRLP (76 aa)) constitute an S1-like domain. Residues 86–113 (DSKRIEDSKDSEDLKDSEDLKDTKDSKD) are disordered.

It belongs to the IF-1 family. As to quaternary structure, component of the 30S ribosomal translation pre-initiation complex which assembles on the 30S ribosome in the order IF-2 and IF-3, IF-1 and N-formylmethionyl-tRNA(fMet); mRNA recruitment can occur at any time during PIC assembly.

It is found in the plastid. The protein localises to the chloroplast. One of the essential components for the initiation of protein synthesis. Stabilizes the binding of IF-2 and IF-3 on the 30S subunit to which N-formylmethionyl-tRNA(fMet) subsequently binds. Helps modulate mRNA selection, yielding the 30S pre-initiation complex (PIC). Upon addition of the 50S ribosomal subunit IF-1, IF-2 and IF-3 are released leaving the mature 70S translation initiation complex. The polypeptide is Translation initiation factor IF-1, chloroplastic (Hordeum vulgare (Barley)).